We begin with the raw amino-acid sequence, 336 residues long: Immune-associated nucleotide-binding protein 13 (336 aa).

The region spanning 15-221 (KPERTLVLLG…YMADLSHELR (207 aa)) is the AIG1-type G domain. The G1 stretch occupies residues 24 to 31 (GRTGNGKS). GTP contacts are provided by residues 24–32 (GRTGNGKSA) and serine 45. The tract at residues 51–55 (FITKE) is G2. The interval 73–76 (DTPG) is G3. Residues 143–146 (TNED) form a G4 region. Residues 179–181 (DNS) form a G5 region. Asparagine 180 contacts GTP. The stretch at 265–328 (KEKISNQLKE…EKETASLRTE (64 aa)) forms a coiled coil.

Belongs to the TRAFAC class TrmE-Era-EngA-EngB-Septin-like GTPase superfamily. AIG1/Toc34/Toc159-like paraseptin GTPase family. IAN subfamily. As to expression, expressed in pollen grains.

The chain is Immune-associated nucleotide-binding protein 13 from Arabidopsis thaliana (Mouse-ear cress).